The sequence spans 657 residues: Probable Xaa-Pro aminopeptidase P (657 aa).

Residues Asp-453, Asp-464, Glu-562, and Glu-576 each coordinate Mn(2+).

Belongs to the peptidase M24B family. Requires Mn(2+) as cofactor.

The enzyme catalyses Release of any N-terminal amino acid, including proline, that is linked to proline, even from a dipeptide or tripeptide.. Its function is as follows. Catalyzes the removal of a penultimate prolyl residue from the N-termini of peptides. This Talaromyces marneffei (strain ATCC 18224 / CBS 334.59 / QM 7333) (Penicillium marneffei) protein is Probable Xaa-Pro aminopeptidase P (ampp).